The following is a 347-amino-acid chain: Probable cytosolic iron-sulfur protein assembly protein 1 (347 aa).

7 WD repeats span residues 11–48 (LHNE…DGLV), 62–101 (SHKK…GDAD), 122–161 (GHEN…EEYE), 168–207 (EHSQ…WEAA), 212–255 (GHEG…SIEE), 266–304 (VHGK…VWEV), and 311–347 (SHSI…WAYN).

This sequence belongs to the WD repeat CIA1 family. In terms of assembly, interacts with NAR1.

Its subcellular location is the cytoplasm. It localises to the nucleus. Its function is as follows. Essential component of the cytosolic iron-sulfur (Fe/S) protein assembly machinery. Required for the maturation of extramitochondrial Fe/S proteins. This is Probable cytosolic iron-sulfur protein assembly protein 1 from Vanderwaltozyma polyspora (strain ATCC 22028 / DSM 70294 / BCRC 21397 / CBS 2163 / NBRC 10782 / NRRL Y-8283 / UCD 57-17) (Kluyveromyces polysporus).